The following is a 125-amino-acid chain: Large ribosomal subunit protein bL12 (125 aa).

It belongs to the bacterial ribosomal protein bL12 family. In terms of assembly, homodimer. Part of the ribosomal stalk of the 50S ribosomal subunit. Forms a multimeric L10(L12)X complex, where L10 forms an elongated spine to which 2 to 4 L12 dimers bind in a sequential fashion. Binds GTP-bound translation factors.

Functionally, forms part of the ribosomal stalk which helps the ribosome interact with GTP-bound translation factors. Is thus essential for accurate translation. The chain is Large ribosomal subunit protein bL12 from Cereibacter sphaeroides (strain ATCC 17023 / DSM 158 / JCM 6121 / CCUG 31486 / LMG 2827 / NBRC 12203 / NCIMB 8253 / ATH 2.4.1.) (Rhodobacter sphaeroides).